A 225-amino-acid polypeptide reads, in one-letter code: Pyridoxine/pyridoxamine 5'-phosphate oxidase (225 aa).

Substrate-binding positions include 21–24 and Lys79; that span reads RKSY. Residues 74–79, 89–90, Arg95, and Lys96 contribute to the FMN site; these read RVVLIK and YT. Positions 136, 140, and 144 each coordinate substrate. Residues 153–154 and Trp197 each bind FMN; that span reads QS. Residue 203 to 205 coordinates substrate; sequence RLH. Arg207 serves as a coordination point for FMN.

It belongs to the pyridoxamine 5'-phosphate oxidase family. As to quaternary structure, homodimer. The cofactor is FMN.

It catalyses the reaction pyridoxamine 5'-phosphate + O2 + H2O = pyridoxal 5'-phosphate + H2O2 + NH4(+). The enzyme catalyses pyridoxine 5'-phosphate + O2 = pyridoxal 5'-phosphate + H2O2. It participates in cofactor metabolism; pyridoxal 5'-phosphate salvage; pyridoxal 5'-phosphate from pyridoxamine 5'-phosphate: step 1/1. Its pathway is cofactor metabolism; pyridoxal 5'-phosphate salvage; pyridoxal 5'-phosphate from pyridoxine 5'-phosphate: step 1/1. Catalyzes the oxidation of either pyridoxine 5'-phosphate (PNP) or pyridoxamine 5'-phosphate (PMP) into pyridoxal 5'-phosphate (PLP). In Paracidovorax citrulli (strain AAC00-1) (Acidovorax citrulli), this protein is Pyridoxine/pyridoxamine 5'-phosphate oxidase.